Consider the following 149-residue polypeptide: Protein FAM72A (149 aa).

This sequence belongs to the FAM72 family. As to quaternary structure, interacts with UNG. As to expression, may be up-regulated in malignant colon cancers, compared to normal colon and colon adenomas. Expression is also elevated in other common cancer types, including breast, lung, uterus, and ovary.

The protein resides in the cytoplasm. Its subcellular location is the mitochondrion. Functionally, may play a role in the regulation of cellular reactive oxygen species metabolism. May participate in cell growth regulation. The polypeptide is Protein FAM72A (FAM72A) (Homo sapiens (Human)).